A 230-amino-acid chain; its full sequence is Orotidine 5'-phosphate decarboxylase (230 aa).

Residues Asp-11, Lys-34, 61–70 (DLKLHDIPNT), Thr-117, Arg-179, Gln-188, Gly-208, and Arg-209 each bind substrate. Catalysis depends on Lys-63, which acts as the Proton donor.

The protein belongs to the OMP decarboxylase family. Type 1 subfamily. As to quaternary structure, homodimer.

The enzyme catalyses orotidine 5'-phosphate + H(+) = UMP + CO2. It participates in pyrimidine metabolism; UMP biosynthesis via de novo pathway; UMP from orotate: step 2/2. Catalyzes the decarboxylation of orotidine 5'-monophosphate (OMP) to uridine 5'-monophosphate (UMP). This chain is Orotidine 5'-phosphate decarboxylase, found in Streptococcus pyogenes serotype M6 (strain ATCC BAA-946 / MGAS10394).